Consider the following 983-residue polypeptide: Bifunctional glutamine synthetase adenylyltransferase/adenylyl-removing enzyme (983 aa).

The segment at 1–468 is adenylyl removase; the sequence is MTVENAKALF…KQYAALFEQA (468 aa). Positions 473–983 are adenylyl transferase; it reads AASGNLVFTG…FDKLVGHGAD (511 aa).

Belongs to the GlnE family. Mg(2+) is required as a cofactor.

It catalyses the reaction [glutamine synthetase]-O(4)-(5'-adenylyl)-L-tyrosine + phosphate = [glutamine synthetase]-L-tyrosine + ADP. The catalysed reaction is [glutamine synthetase]-L-tyrosine + ATP = [glutamine synthetase]-O(4)-(5'-adenylyl)-L-tyrosine + diphosphate. Functionally, involved in the regulation of glutamine synthetase GlnA, a key enzyme in the process to assimilate ammonia. When cellular nitrogen levels are high, the C-terminal adenylyl transferase (AT) inactivates GlnA by covalent transfer of an adenylyl group from ATP to specific tyrosine residue of GlnA, thus reducing its activity. Conversely, when nitrogen levels are low, the N-terminal adenylyl removase (AR) activates GlnA by removing the adenylyl group by phosphorolysis, increasing its activity. The regulatory region of GlnE binds the signal transduction protein PII (GlnB) which indicates the nitrogen status of the cell. This Brucella melitensis biotype 1 (strain ATCC 23456 / CCUG 17765 / NCTC 10094 / 16M) protein is Bifunctional glutamine synthetase adenylyltransferase/adenylyl-removing enzyme.